Consider the following 1742-residue polypeptide: NACHT and WD repeat domain-containing protein 2 (1742 aa).

LRR repeat units follow at residues 386-410, 677-698, 724-747, 883-906, and 925-953; these read FYEYKCESLNILHKYILPSKTGHIN, LEDVLALDNSVMNELNENTRPS, VKNVTLLVWANRHLQLIAQKLYLQ, YSQEKELKFLASTLRSIRNKVIAF, and LPKLRHLLLECDKDGPKYCSIVPLHSSMD. Positions 410–737 constitute an NACHT domain; that stretch reads NPLVVYGGPC…TLLVWANRHL (328 aa). 11 WD repeats span residues 963–1004, 1007–1046, 1140–1179, 1229–1271, 1272–1311, 1314–1353, 1355–1394, 1396–1434, 1476–1516, 1522–1561, and 1614–1653; these read LASS…LLRQ, TAQSVILGMKLSSDEKYLVVATTNNTLLIYDNVNSCLLSE, FSGGFVKFLLILDTAQEMVMVDSEGSLSVWNTEDISNPQL, RHNE…ASLQ, ESSGTIVKLVKSSHHNMLLSLSTSGVLSIWDIDIITAMSN, KTGKPIQSLVLPARGEIIYSLDGSDCVHKWNFSSGFIEAV, KHEGIVEHCVLTSTGDLMVTSDDKSSQYVWHTSSGENLFR, NGQRISQLLITHNDQFVVSLCEENASRVWRLATGHRVCN, EDGI…ICRR, NFLKNLEDFEISPNGKLGIISRGDENINVLDLHSGKLRVV, and SLYKTPTFLALSQRHLNIIVGFDDGSIGIYTVVDRVDAAL. A disordered region spans residues 1702–1721; sequence PITVSDSSESNEATPSKKHN. Residues 1703–1715 are compositionally biased toward polar residues; that stretch reads ITVSDSSESNEAT.

This Mus musculus (Mouse) protein is NACHT and WD repeat domain-containing protein 2 (Nwd2).